The sequence spans 145 residues: Large ribosomal subunit protein uL15 (145 aa).

Residues 1–50 (MLHTIKPVTNARKSTKRLGRGPGSGTGKTSGKGHKGQLARSGKTLRPGFE) are disordered. Residues 20 to 30 (RGPGSGTGKTS) are compositionally biased toward gly residues.

The protein belongs to the universal ribosomal protein uL15 family. Part of the 50S ribosomal subunit.

Functionally, binds to the 23S rRNA. The chain is Large ribosomal subunit protein uL15 from Aster yellows witches'-broom phytoplasma (strain AYWB).